Consider the following 928-residue polypeptide: Arf guanine nucleotide exchange factor sec74 (928 aa).

Polar residues-rich tracts occupy residues 1-12 and 57-83; these read MDESSRIASSSA and TITSDTPKVSSQHSPVSSAYTGDSTTD. Disordered stretches follow at residues 1–152 and 227–249; these read MDES…RPSS and SLSSNFSARTPASNQSSVSEDFG. S67 bears the Phosphoserine mark. Composition is skewed to low complexity over residues 89-102 and 115-132; these read GHSSSQKLSNKVSS and SKSSSSQCSSPFLPTSSS. The region spanning 228-420 is the SEC7 domain; it reads LSSNFSARTP…ECFYDNITYT (193 aa). Residues 234 to 245 show a composition bias toward polar residues; the sequence is ARTPASNQSSVS. In terms of domain architecture, PH spans 548-677; sequence KVFKLGILIQ…WLVKINFVST (130 aa).

It is found in the cytoplasm. The protein resides in the cell tip. Guanine nucleotide exchange factor for Arf GTPases, stimulating the nucleotide exchange from the GDP-bound to the GTP-bound form. Involved in vesicular transport. This Schizosaccharomyces pombe (strain 972 / ATCC 24843) (Fission yeast) protein is Arf guanine nucleotide exchange factor sec74 (sec74).